The chain runs to 277 residues: Large ribosomal subunit protein uL2 (277 aa).

Residues 218-277 (PTVRGSVMNPNDHPHGGGEGKSPIGHPSPLTPWGKPALGYKTRKNKKYSDGMIIKRRGQK) form a disordered region.

It belongs to the universal ribosomal protein uL2 family. Part of the 50S ribosomal subunit. Forms a bridge to the 30S subunit in the 70S ribosome.

Functionally, one of the primary rRNA binding proteins. Required for association of the 30S and 50S subunits to form the 70S ribosome, for tRNA binding and peptide bond formation. It has been suggested to have peptidyltransferase activity; this is somewhat controversial. Makes several contacts with the 16S rRNA in the 70S ribosome. The sequence is that of Large ribosomal subunit protein uL2 from Clostridium novyi (strain NT).